We begin with the raw amino-acid sequence, 467 residues long: Calcium-binding protein P (467 aa).

Composition is skewed to pro residues over residues 1–10 (MQNPQNPPPA) and 45–62 (QYPPQQPGAPGSNLPPYP). The tract at residues 1–311 (MQNPQNPPPA…GAYPGQPPMG (311 aa)) is disordered. Residues 45 to 49 (QYPPQ) carry the XYPPX motif. The segment covering 63 to 74 (GTQQPGAPGAPG) has biased composition (low complexity). Short sequence motifs (XYPPX) lie at residues 75-79 (QYPPQ), 83-87 (QYPPQ), 94-98 (QYPPQ), 104-108 (GYPPQ), 115-119 (QYPPQ), 125-129 (GYPPQ), 136-140 (QYPPQ), 146-150 (QYPPQ), 157-161 (QYPPQ), 165-169 (QYPPQ), 176-180 (AYPPQ), 187-191 (AYPPQ), 221-225 (GVPPQ), 238-242 (AYPPQ), 247-251 (AYPPQ), 256-260 (AYPPQ), and 275-279 (AYPPQ). Pro residues-rich tracts occupy residues 75–109 (QYPPQQPGQYPPQQPGAPGQYPPQQPGQPGYPPQQ) and 118–131 (PQQPGQPGYPPQQP). Residues 132 to 145 (GAPGQYPPQQGQPG) show a composition bias toward low complexity. Low complexity-rich tracts occupy residues 153–193 (GQPG…PQQG) and 215–246 (AYPGQPGVPPQQGAYPGQQPPMGAYPPQGQPG). Positions 253–311 (QPGAYPPQQQQVAYPGQQPPMGAYPPQQGAYPGQQGAYPGQQGAYPGQQGAYPGQPPMG) are enriched in low complexity. EF-hand domains lie at 399-434 (QKMMAASAAFRIHDSNCSGTLSKKEFKKLIKHLGYY) and 435-467 (FSKGQTKMLFHSIDRDYSGSLSEREFVDWWSMQ). D412, N414, S416, T418, and E423 together coordinate Ca(2+).

This Dictyostelium discoideum (Social amoeba) protein is Calcium-binding protein P (cbpP).